The chain runs to 226 residues: Ribonuclease 3 (226 aa).

The region spanning 6 to 128 is the RNase III domain; that stretch reads INKLQRKLGY…LIGGVFLDSD (123 aa). A Mg(2+)-binding site is contributed by Glu-41. Asp-45 is a catalytic residue. Asp-114 and Glu-117 together coordinate Mg(2+). The active site involves Glu-117. Positions 155 to 225 constitute a DRBM domain; sequence DPKTRLQEFL…AEQALIKLGI (71 aa).

This sequence belongs to the ribonuclease III family. As to quaternary structure, homodimer. Requires Mg(2+) as cofactor.

It is found in the cytoplasm. The catalysed reaction is Endonucleolytic cleavage to 5'-phosphomonoester.. Functionally, digests double-stranded RNA. Involved in the processing of primary rRNA transcript to yield the immediate precursors to the large and small rRNAs (23S and 16S). Processes some mRNAs, and tRNAs when they are encoded in the rRNA operon. Processes pre-crRNA and tracrRNA of type II CRISPR loci if present in the organism. The protein is Ribonuclease 3 of Erwinia tasmaniensis (strain DSM 17950 / CFBP 7177 / CIP 109463 / NCPPB 4357 / Et1/99).